Reading from the N-terminus, the 439-residue chain is Xylose isomerase (439 aa).

Active-site residues include His-101 and Asp-104. 7 residues coordinate Mg(2+): Glu-232, Glu-268, His-271, Asp-296, Asp-307, Asp-309, and Asp-339.

Belongs to the xylose isomerase family. In terms of assembly, homotetramer. It depends on Mg(2+) as a cofactor.

It localises to the cytoplasm. The catalysed reaction is alpha-D-xylose = alpha-D-xylulofuranose. This chain is Xylose isomerase (xylA), found in Thermoanaerobacterium thermosaccharolyticum (strain ATCC 7956 / DSM 571 / NCIMB 9385 / NCA 3814 / NCTC 13789 / WDCM 00135 / 2032) (Clostridium thermosaccharolyticum).